We begin with the raw amino-acid sequence, 421 residues long: Mannose-1-phosphate guanylyltransferase regulatory subunit alpha (421 aa).

Residues 2–252 (LKAVILIGGP…EGCWSQIKSA (251 aa)) form a substrate-binding domain region. Residues glutamate 85 and glutamine 248 each contribute to the GDP-alpha-D-mannose site. The hexapeptide repeat domain stretch occupies residues 274-421 (LASTKEGGPT…SRSFKNQIIL (148 aa)). A C-loop region spans residues 357–385 (TPSDPNPNDPYSKIDSETLFREGKLTPSI).

The protein belongs to the transferase hexapeptide repeat family. Component of the GMPPA-GMPPB mannose-1-phosphate guanylyltransferase complex composed of 4 gmppa subunits and 8 gmppb subunits; the complex is organized into three layers, a central layer made up of 2 gmppa dimers sandwiched between two layers each made up of 2 gmppb dimers.

It is found in the cytoplasm. Functionally, regulatory subunit of the GMPPA-GMPPB mannose-1-phosphate guanylyltransferase complex; reduces the catalytic activity of GMPPB when part of the complex. Mediates allosteric feedback inhibition of GMPPB catalytic activity upon binding GDP-alpha-D-mannose. Together with GMPPB regulates GDP-alpha-D-mannose levels. The polypeptide is Mannose-1-phosphate guanylyltransferase regulatory subunit alpha (gmppa) (Xenopus tropicalis (Western clawed frog)).